The chain runs to 212 residues: Large ribosomal subunit protein uL3 (212 aa).

Glutamine 153 is subject to N5-methylglutamine.

Belongs to the universal ribosomal protein uL3 family. Part of the 50S ribosomal subunit. Forms a cluster with proteins L14 and L19. Methylated by PrmB.

In terms of biological role, one of the primary rRNA binding proteins, it binds directly near the 3'-end of the 23S rRNA, where it nucleates assembly of the 50S subunit. This Colwellia psychrerythraea (strain 34H / ATCC BAA-681) (Vibrio psychroerythus) protein is Large ribosomal subunit protein uL3.